Reading from the N-terminus, the 66-residue chain is Beta-defensin 13 (66 aa).

The N-terminal stretch at 1-22 (MRIFSLIVAGLVLLIQLHPAKG) is a signal peptide. Intrachain disulfides connect C30-C59, C37-C51, and C41-C60.

It belongs to the beta-defensin family.

The protein resides in the secreted. Its function is as follows. Has antibacterial activity. This Rattus norvegicus (Rat) protein is Beta-defensin 13 (Defb13).